Here is a 152-residue protein sequence, read N- to C-terminus: MEKPNMRNYYAIKVVGGQEINVALMLEERIKTNNIKGIYAIIVPPNLKGYVVLEAEGLHIVKPLIAGIRNARGLAQGLLPRDEILKIVSRKTVGPTVKPGDVVEVISGPFRGTQAQVIRVEEAKGEVVLNILESAFPLQVTVPLDQIKVSKR.

The KOW domain maps to 99–128; sequence PGDVVEVISGPFRGTQAQVIRVEEAKGEVV.

The protein belongs to the archaeal Spt5 family. As to quaternary structure, heterodimer composed of Spt4 and Spt5. Interacts with RNA polymerase (RNAP).

Functionally, stimulates transcription elongation. The sequence is that of Transcription elongation factor Spt5 from Saccharolobus solfataricus (strain ATCC 35092 / DSM 1617 / JCM 11322 / P2) (Sulfolobus solfataricus).